Reading from the N-terminus, the 940-residue chain is Protein translocase subunit SecA (940 aa).

ATP-binding positions include Q87, 105 to 109 (GEGKT), and D494. Residues 879–940 (AQQQKKAVEG…KCHGASEASV (62 aa)) are disordered. A compositionally biased stretch (basic and acidic residues) spans 884 to 898 (KAVEGRATADGKLDE). Residues 900–915 (SVAAAARPAAASRPAV) show a composition bias toward low complexity. Zn(2+)-binding residues include C921, C923, C932, and H933.

This sequence belongs to the SecA family. In terms of assembly, monomer and homodimer. Part of the essential Sec protein translocation apparatus which comprises SecA, SecYEG and auxiliary proteins SecDF-YajC and YidC. It depends on Zn(2+) as a cofactor.

It is found in the cell inner membrane. The protein localises to the cytoplasm. It carries out the reaction ATP + H2O + cellular proteinSide 1 = ADP + phosphate + cellular proteinSide 2.. Its function is as follows. Part of the Sec protein translocase complex. Interacts with the SecYEG preprotein conducting channel. Has a central role in coupling the hydrolysis of ATP to the transfer of proteins into and across the cell membrane, serving as an ATP-driven molecular motor driving the stepwise translocation of polypeptide chains across the membrane. The sequence is that of Protein translocase subunit SecA from Myxococcus xanthus (strain DK1622).